Consider the following 303-residue polypeptide: Bifunctional protein FolD (303 aa).

Residues 169–171, T196, and V237 contribute to the NADP(+) site; that span reads GRG.

It belongs to the tetrahydrofolate dehydrogenase/cyclohydrolase family. In terms of assembly, homodimer.

The enzyme catalyses (6R)-5,10-methylene-5,6,7,8-tetrahydrofolate + NADP(+) = (6R)-5,10-methenyltetrahydrofolate + NADPH. It catalyses the reaction (6R)-5,10-methenyltetrahydrofolate + H2O = (6R)-10-formyltetrahydrofolate + H(+). It functions in the pathway one-carbon metabolism; tetrahydrofolate interconversion. Catalyzes the oxidation of 5,10-methylenetetrahydrofolate to 5,10-methenyltetrahydrofolate and then the hydrolysis of 5,10-methenyltetrahydrofolate to 10-formyltetrahydrofolate. The sequence is that of Bifunctional protein FolD from Micrococcus luteus (strain ATCC 4698 / DSM 20030 / JCM 1464 / CCM 169 / CCUG 5858 / IAM 1056 / NBRC 3333 / NCIMB 9278 / NCTC 2665 / VKM Ac-2230) (Micrococcus lysodeikticus).